The sequence spans 318 residues: Vomeronasal type-1 receptor A11 (318 aa).

Topologically, residues 1–32 are extracellular; it reads MSEILFFSPQPLFSHMMNKNSRLHTHSNIKNT. The helical transmembrane segment at 33–53 threads the bilayer; it reads FFSEIGIGISGNSFLLLFHIL. Topologically, residues 54–65 are cytoplasmic; sequence KFIRGHRPRLTD. Residues 66-86 form a helical membrane-spanning segment; that stretch reads LPIGLLSLIHLLMLLLMAFIA. Residues 87-101 lie on the Extracellular side of the membrane; it reads TDIFISRRGWDGIIC. C101 and C188 are disulfide-bonded. Residues 102–118 form a helical membrane-spanning segment; sequence KFLVYLYGVLRGLSLCT. Over 119 to 147 the chain is Cytoplasmic; the sequence is TSMLSVLQAIILSPRSSCLAKLKHKSPHH. Residues 148-168 form a helical membrane-spanning segment; sequence ISCAIIFLSVLYMLISSHILL. At 169–206 the chain is on the extracellular side; that stretch reads SITATPNLTMNDFLYVSQSCSLLPLSYLVQSMYSTLLA. A glycan (N-linked (GlcNAc...) asparagine) is linked at N175. A helical membrane pass occupies residues 207 to 227; the sequence is LREVFLISLMVLSTLYMVVLL. Topologically, residues 228–254 are cytoplasmic; that stretch reads CRHRKQAQHLQGTSLSPKASAEQRATQ. A helical transmembrane segment spans residues 255 to 275; sequence TILMLMTFFVLMSIFDSIVSC. Over 276–285 the chain is Extracellular; sequence SRTMFLDDPT. A helical transmembrane segment spans residues 286–306; the sequence is SYSIHIFVMHIYATVSPFVFM. At 307–318 the chain is on the cytoplasmic side; it reads STEKHIVNILRG.

This sequence belongs to the G-protein coupled receptor 1 family.

The protein localises to the cell membrane. Putative pheromone receptor implicated in the regulation of social and reproductive behavior. The sequence is that of Vomeronasal type-1 receptor A11 from Mus musculus (Mouse).